A 129-amino-acid chain; its full sequence is M-zodatoxin-Lt8g (129 aa).

The N-terminal stretch at 1–20 (MKYFVVALALVAAFACIAES) is a signal peptide. A propeptide spanning residues 21–60 (KPAESEHELAEVEEENELADLEDAVWLEHLADLSDLEEAR) is cleaved from the precursor. Residues 57 to 60 (EEAR) carry the Processing quadruplet motif motif.

In terms of processing, cleavage of the propeptide depends on the processing quadruplet motif (XXXR, with at least one of X being E). Expressed by the venom gland.

Its subcellular location is the secreted. In terms of biological role, insecticidal, cytolytic and antimicrobial peptide. Has insecticidal activity against the flesh fly S.carnaria. Has antibacterial activity against the Gram-negative bacteria E.coli. Forms voltage-dependent, ion-permeable channels in membranes. At high concentration causes cell membrane lysis. This chain is M-zodatoxin-Lt8g (cit 1-8), found in Lachesana tarabaevi (Spider).